The primary structure comprises 510 residues: Internal alternative NAD(P)H-ubiquinone oxidoreductase A1, mitochondrial (510 aa).

A mitochondrion-targeting transit peptide spans 1 to 48 (MLWIKNLARISQTTSSSVGNVFRNPESYTLSSRFCTALQKQQVTDTVQ). FAD is bound at residue 75-105 (RVLVLGSGWAGCRVLKGIDTSIYDVVCVSPR). Residue 242 to 278 (LHCVVVGGGPTGVEFSGELSDFIMKDVRQRYSHVKDD) participates in NAD(+) binding. Residues 501–510 (FVFGRDISRI) carry the Microbody targeting signal motif.

This sequence belongs to the NADH dehydrogenase family. FAD is required as a cofactor. As to expression, expressed in seedlings, cotyledons, young leaves, stems and flowers and, to a lower extent, in roots and buds.

The protein resides in the mitochondrion inner membrane. It is found in the peroxisome. It carries out the reaction a quinone + NADH + H(+) = a quinol + NAD(+). It catalyses the reaction a ubiquinone + NADH + H(+) = a ubiquinol + NAD(+). Alternative NADH-ubiquinone oxidoreductase which catalyzes the oxidation of mitochondrial NADH does not translocate protons across the inner mitochondrial membrane. The protein is Internal alternative NAD(P)H-ubiquinone oxidoreductase A1, mitochondrial (NDA1) of Arabidopsis thaliana (Mouse-ear cress).